Consider the following 451-residue polypeptide: Serine/threonine-protein phosphatase 2A 55 kDa regulatory subunit B delta isoform (451 aa).

7 WD repeats span residues 30 to 69 (AEAD…KSRP), 95 to 136 (EIEE…KRAE), 179 to 217 (AHTY…RSFN), 228 to 268 (ELTE…LCDR), 287 to 325 (EIIS…RPVE), 342 to 383 (ENDC…DITL), and 418 to 451 (DFNK…DKIN).

This sequence belongs to the phosphatase 2A regulatory subunit B family. In terms of assembly, PP2A consists of a common heterodimeric core enzyme, composed of a 36 kDa catalytic subunit (subunit C) and a 65 kDa constant regulatory subunit (PR65 or subunit A), that associates with a variety of regulatory subunits.

The protein localises to the cytoplasm. Functionally, substrate-recognition subunit of protein phosphatase 2A (PP2A) that plays a key role in cell cycle by controlling mitosis entry and exit. The activity of PP2A complexes containing PPP2R2D (PR55-delta) fluctuate during the cell cycle: the activity is high in interphase and low in mitosis. This is Serine/threonine-protein phosphatase 2A 55 kDa regulatory subunit B delta isoform (PPP2R2D) from Gallus gallus (Chicken).